A 366-amino-acid polypeptide reads, in one-letter code: Autoinducer 2-binding periplasmic protein LuxP (366 aa).

The first 13 residues, 1-13 (MKKILLTCLLASA), serve as a signal peptide directing secretion.

It belongs to the bacterial solute-binding protein 2 family.

It is found in the periplasm. Binds to an autoinducer molecule. This complex then interacts with the LuxQ sensor protein. The sequence is that of Autoinducer 2-binding periplasmic protein LuxP (luxP) from Vibrio vulnificus (strain CMCP6).